The primary structure comprises 1245 residues: TAL effector protein Brg11 (1245 aa).

Disordered stretches follow at residues 1–87 (MRIG…LVPE) and 173–205 (CPQAFASPPRAPRSARARRARTGGDAWPAPTFL). Residues 67–87 (PRRPLPVAPASAPPAPSLVPE) are compositionally biased toward pro residues. The Nuclear localization signal 1 motif lies at 185 to 191 (RSARARR). The Cryptic repeat -1 repeat unit spans residues 286–320 (LTRAHIVDIARQRSGDLALQALLPVATALTAAPLR). Residues 321 to 354 (LSASQIATVAQYGERPAIQALYRLRRKLTRAPLH) form a Cryptic repeat 0 repeat. Core repeat repeat units lie at residues 355–389 (LTPQQVVAIASNTGGKRALEAVCVQLPVLRAAPYR), 390–424 (LSTEQVVAIASNKGGKQALEAVKAHLLDLLGAPYV), 425–459 (LDTEQVVAIASHNGGKQALEAVKADLLDLRGAPYA), 460–494 (LSTEQVVAIASHNGGKQALEAVKADLLELRGAPYA), 495–529 (LSTEQVVAIASHNGGKQALEAVKAHLLDLRGVPYA), 530–564 (LSTEQVVAIASHNGGKQALEAVKAQLLDLRGAPYA), 565–599 (LSTAQVVAIASNGGGKQALEGIGEQLLKLRTAPYG), 600–634 (LSTEQVVAIASHDGGKQALEAVGAQLVALRAAPYA), 635–669 (LSTEQVVAIASNKGGKQALEAVKAQLLELRGAPYA), 670–704 (LSTAQVVAIASHDGGNQALEAVGTQLVALRAAPYA), 705–739 (LSTEQVVAIASHDGGKQALEAVGAQLVALRAAPYA), 740–774 (LNTEQVVAIASSHGGKQALEAVRALFPDLRAAPYA), 775–809 (LSTAQLVAIASNPGGKQALEAVRALFRELRAAPYA), 810–844 (LSTEQVVAIASNHGGKQALEAVRALFRGLRAAPYG), 845–879 (LSTAQVVAIASSNGGKQALEAVWALLPVLRATPYD), and 880–914 (LNTAQIVAIASHDGGKPALEAVWAKLPVLRGAPYA). One copy of the Cryptic repeat +1 repeat lies at 915-948 (LSTAQVVAIACISGQQALEAIEAHMPTLRQASHS). One copy of the Cryptic repeat +2 repeat lies at 949 to 982 (LSPERVAAIACIGGRSAVEAVRQGLPVKAIRRIR). Short sequence motifs (nuclear localization signal) lie at residues 980–983 (RIRR), 1108–1111 (HRKR), and 1145–1148 (RRKR). The tract at residues 1096–1138 (SPGMAGQSACSPHRKRPAETAIAPRSIRRSPNNAGQPSEPWPD) is disordered. The segment at 1237–1245 (DWLLQILET) is activation domain.

It belongs to the transcription activator-like effector (TALE) family. RipTAL/RTL subfamily.

The protein localises to the secreted. Its subcellular location is the host nucleus. Its function is as follows. Exported into plant cells, where it is targeted to the nucleus and probably acts as a transcription factor. Binds DNA in a sequence-specific manner. May contribute to plant pathogenicity. This chain is TAL effector protein Brg11, found in Ralstonia nicotianae (strain ATCC BAA-1114 / GMI1000) (Ralstonia solanacearum).